A 393-amino-acid chain; its full sequence is Putative F-box protein At1g55070 (393 aa).

Positions G29 to L74 constitute an F-box domain.

The sequence is that of Putative F-box protein At1g55070 from Arabidopsis thaliana (Mouse-ear cress).